Here is a 176-residue protein sequence, read N- to C-terminus: Endoribonuclease YbeY (176 aa).

Zn(2+) contacts are provided by histidine 117, histidine 121, and histidine 127.

It belongs to the endoribonuclease YbeY family. Zn(2+) serves as cofactor.

Its subcellular location is the cytoplasm. Functionally, single strand-specific metallo-endoribonuclease involved in late-stage 70S ribosome quality control and in maturation of the 3' terminus of the 16S rRNA. The sequence is that of Endoribonuclease YbeY from Methylocella silvestris (strain DSM 15510 / CIP 108128 / LMG 27833 / NCIMB 13906 / BL2).